Reading from the N-terminus, the 282-residue chain is D-alanine aminotransferase (282 aa).

Tyr32 is a substrate binding site. Pyridoxal 5'-phosphate is bound at residue Arg51. Arg99 and His101 together coordinate substrate. Lys146 serves as the catalytic Proton acceptor. Position 146 is an N6-(pyridoxal phosphate)lysine (Lys146). Pyridoxal 5'-phosphate is bound at residue Glu178.

This sequence belongs to the class-IV pyridoxal-phosphate-dependent aminotransferase family. Homodimer. It depends on pyridoxal 5'-phosphate as a cofactor.

The catalysed reaction is D-alanine + 2-oxoglutarate = D-glutamate + pyruvate. Its function is as follows. Acts on the D-isomers of alanine, leucine, aspartate, glutamate, aminobutyrate, norvaline and asparagine. The enzyme transfers an amino group from a substrate D-amino acid to the pyridoxal phosphate cofactor to form pyridoxamine and an alpha-keto acid in the first half-reaction. The second half-reaction is the reverse of the first, transferring the amino group from the pyridoxamine to a second alpha-keto acid to form the product D-amino acid via a ping-pong mechanism. This is an important process in the formation of D-alanine and D-glutamate, which are essential bacterial cell wall components. This Staphylococcus haemolyticus protein is D-alanine aminotransferase (dat).